Consider the following 384-residue polypeptide: Lipid-A-disaccharide synthase 1 (384 aa).

Belongs to the LpxB family.

It catalyses the reaction a lipid X + a UDP-2-N,3-O-bis[(3R)-3-hydroxyacyl]-alpha-D-glucosamine = a lipid A disaccharide + UDP + H(+). It participates in bacterial outer membrane biogenesis; LPS lipid A biosynthesis. Its function is as follows. Condensation of UDP-2,3-diacylglucosamine and 2,3-diacylglucosamine-1-phosphate to form lipid A disaccharide, a precursor of lipid A, a phosphorylated glycolipid that anchors the lipopolysaccharide to the outer membrane of the cell. The sequence is that of Lipid-A-disaccharide synthase 1 from Legionella pneumophila (strain Lens).